Here is a 343-residue protein sequence, read N- to C-terminus: Methionine import ATP-binding protein MetN 1 (343 aa).

Positions 2–241 (IKLSNITKVF…PKTPLAQKFI (240 aa)) constitute an ABC transporter domain. Position 38–45 (38–45 (GASGAGKS)) interacts with ATP.

This sequence belongs to the ABC transporter superfamily. Methionine importer (TC 3.A.1.24) family. In terms of assembly, the complex is composed of two ATP-binding proteins (MetN), two transmembrane proteins (MetI) and a solute-binding protein (MetQ).

It localises to the cell inner membrane. The enzyme catalyses L-methionine(out) + ATP + H2O = L-methionine(in) + ADP + phosphate + H(+). It carries out the reaction D-methionine(out) + ATP + H2O = D-methionine(in) + ADP + phosphate + H(+). Functionally, part of the ABC transporter complex MetNIQ involved in methionine import. Responsible for energy coupling to the transport system. The polypeptide is Methionine import ATP-binding protein MetN 1 (Salmonella typhi).